The sequence spans 94 residues: MSEESGRRNLRMPSDDEMFAVVVEHNGGNHVRVRCQDGENRMGRIPGRMKYRTWINEGDVVLVEPWAWQDEKANIEWRYSEQDAEQLRTEGHIK.

One can recognise an S1-like domain in the interval 6-80; sequence GRRNLRMPSD…EKANIEWRYS (75 aa).

It belongs to the eIF-1A family.

Its function is as follows. Seems to be required for maximal rate of protein biosynthesis. Enhances ribosome dissociation into subunits and stabilizes the binding of the initiator Met-tRNA(I) to 40 S ribosomal subunits. This Haloquadratum walsbyi (strain DSM 16790 / HBSQ001) protein is Translation initiation factor 1A 2.